The chain runs to 265 residues: Dimethylsulfide dehydrogenase subunit gamma (265 aa).

The N-terminal stretch at 1 to 25 is a signal peptide; it reads MPGFRFLLAATAAFLATSPALPLSA. Residues H81 and M147 each contribute to the heme b site.

As to quaternary structure, heterotrimer of alpha, beta and gamma subunits. Requires heme b as cofactor.

It is found in the periplasm. In terms of biological role, may transfer electrons to the iron-sulfur centers of DdhB. This is Dimethylsulfide dehydrogenase subunit gamma (ddhC) from Rhodovulum sulfidophilum (Rhodobacter sulfidophilus).